A 637-amino-acid polypeptide reads, in one-letter code: MTAAQKETLGFQTEVKQLLNLMIHSLYSNKEIFLRELVSNASDAADKLRFLALSQGDLYQGDADLRVRISADKEANTITISDNGIGMTRDEVISSLGTIAKSGTAEFFKNLTGDQSKDSQLIGQFGVGFYSAFIVADLVTVRTRKAGETTAYEWESQGEGEYTLQEIEKEGRGTDIILHLREEEKEFADEWRLRSIVTKYSDHISTPVQMYKAEVPESEGEDGEKIPAVPGEWESINRATALWTRDKSELSDDEYKEFYKHVSLDWEDPLSWAHNKVEGKTEYTSLLYIPKKAPFDLWNRDRQSGLKLYVQRVFIMDDAEQFMPSYLRFVKGLLDSNDLPLNVSREILQDNKVTQAIRKGCTSRIIKMLERMAKNKADDYQVFWNEFGQVIKEGPAEDAANKEAICKLLRFSSTHTDSATQDVSLEQYVERMNEGQEKIYYVVADTFTAAKNSPHLEIFRKKGIEVLLLSDRVDEWMMSHLTEFADKQLQSITRGDLDLGKLDDEETKKAQEESEKEVAGLVERIKTALGDEVKEVRFTHRLTDSPACVVSDDNDMSSQMQKLMESVGQAAPEAKPVFELNPEHQLVKHLNDEQDEDKFAQWSHVLLDQALLAERGTLKDPTGFVTRLNKLMLELSK.

The segment at M1–R345 is a; substrate-binding. Residues E346 to K562 are b. The c stretch occupies residues L563–K637.

Belongs to the heat shock protein 90 family. In terms of assembly, homodimer.

It localises to the cytoplasm. Its function is as follows. Molecular chaperone. Has ATPase activity. The protein is Chaperone protein HtpG of Pseudoalteromonas translucida (strain TAC 125).